The chain runs to 622 residues: Transcription factor SKN7 (622 aa).

The segment covering 1–12 (MSFSTINSNVNK) has biased composition (polar residues). A disordered region spans residues 1–29 (MSFSTINSNVNKTTGDSNNNTTENSSTAD). Residues 13-27 (TTGDSNNNTTENSST) show a composition bias toward low complexity. The DNA-binding domain stretch occupies residues 84–190 (ANEFVRKLFR…GLDNIKRKIP (107 aa)). The interval 212-303 (TNPNNPSGSL…NNFNTLCSTL (92 aa)) is hydrophobic repeat HR-A/B. Residues 240 to 260 (FGNLRRRVDKLQKELDMSKME) are a coiled coil. Residues 378–492 (HVLLVEDDAV…DLHSILIRYL (115 aa)) enclose the Response regulatory domain. A 4-aspartylphosphate modification is found at aspartate 427. 2 disordered regions span residues 501 to 579 (QQLP…QHHN) and 599 to 622 (TVPH…NQLS). Residues 512–527 (THSNTNTANSNPNTIN) are compositionally biased toward low complexity. A compositionally biased stretch (polar residues) spans 537 to 554 (DNPSTTTPVTPGASISSA). Over residues 555–578 (QHVQQGQQEQQHQIFHAQQQQQHH) the composition is skewed to low complexity. A compositionally biased stretch (polar residues) spans 600 to 622 (VPHSSMGSTPQLPQSTLQENQLS).

The protein belongs to the SKN7 family. In terms of assembly, homotrimer. In terms of processing, the phosphorelay mechanism involves the sequential transfer of a phosphate group from 'His-576' (H1) to 'Asp-1144' (D1) of SLN1, then to 'His-64' (H2) of YPD1 and finally to Asp-427 (D2) of SKN7.

It localises to the nucleus. In terms of biological role, transcription factor that is part of a SLN1-YPD1-SKN7 two-component regulatory system, which controls gene expression in response to changes in the osmolarity of the extracellular environment. Under low osmotic conditions, phosphorylated and activated by the phosphorelay intermediate protein YPD1. Also activated in response to oxidative stress, independent on the two-component regulatory system. Regulates heat shock genes in response to oxidative stress and genes involved in cell wall integrity in response to osmotic changes. The polypeptide is Transcription factor SKN7 (SKN7) (Saccharomyces cerevisiae (strain ATCC 204508 / S288c) (Baker's yeast)).